The chain runs to 476 residues: Aspartyl/glutamyl-tRNA(Asn/Gln) amidotransferase subunit B (476 aa).

Belongs to the GatB/GatE family. GatB subfamily. In terms of assembly, heterotrimer of A, B and C subunits.

It carries out the reaction L-glutamyl-tRNA(Gln) + L-glutamine + ATP + H2O = L-glutaminyl-tRNA(Gln) + L-glutamate + ADP + phosphate + H(+). The enzyme catalyses L-aspartyl-tRNA(Asn) + L-glutamine + ATP + H2O = L-asparaginyl-tRNA(Asn) + L-glutamate + ADP + phosphate + 2 H(+). Functionally, allows the formation of correctly charged Asn-tRNA(Asn) or Gln-tRNA(Gln) through the transamidation of misacylated Asp-tRNA(Asn) or Glu-tRNA(Gln) in organisms which lack either or both of asparaginyl-tRNA or glutaminyl-tRNA synthetases. The reaction takes place in the presence of glutamine and ATP through an activated phospho-Asp-tRNA(Asn) or phospho-Glu-tRNA(Gln). The protein is Aspartyl/glutamyl-tRNA(Asn/Gln) amidotransferase subunit B of Clostridium botulinum (strain Langeland / NCTC 10281 / Type F).